We begin with the raw amino-acid sequence, 363 residues long: Src kinase-associated phosphoprotein 1 (363 aa).

Residues 62-94 (PFPSDYKEEDGSDDNRSSSLGRSAQSDDASLAS) are disordered. Residues 84–94 (SAQSDDASLAS) show a composition bias toward low complexity. The PH domain occupies 118–221 (NVLKQGYLEK…WVDQIKIVLR (104 aa)). The interval 227 to 273 (VIPVDDEEEEEEEEETYDDIEGEGGPPLPQPLSGTWGRGGDTGAADE) is disordered. The span at 230–248 (VDDEEEEEEEEETYDDIEG) shows a compositional bias: acidic residues. An SH3 domain is found at 301 to 362 (EYANYYQGLW…PKDFLHPAYI (62 aa)).

Belongs to the SKAP family. In terms of assembly, homodimer. Post-translationally, phosphorylated on tyrosines.

It is found in the cytoplasm. Its subcellular location is the nucleus. The protein localises to the cell membrane. Positively regulates T-cell receptor signaling. Required for optimal conjugation between T-cells and antigen-presenting cells. The protein is Src kinase-associated phosphoprotein 1 (skap1) of Takifugu rubripes (Japanese pufferfish).